A 4095-amino-acid polypeptide reads, in one-letter code: Protein adenylyltransferase and cysteine protease IbpA (4095 aa).

The signal sequence occupies residues 1–97 (MNKNCYKLIF…MVAAPNFAQS (97 aa)). Binds bovine IgG2 Fc stretches follow at residues 972 to 1515 (SERI…FVKA) and 1116 to 1255 (SEVQ…FLKE). Disordered stretches follow at residues 1082–1117 (EVSDDWERDPDEPDEPDYKTESRLETRDRFDTLPSE), 1130–1154 (KEKAQQKRQAEALQAKTKNEQLQSD), 1204–1223 (QEALAKQKQEQQKQADAKAK), 1625–1652 (TVSHERDSQNGEKTNIGGASSNTGTGFT), and 1705–1732 (EEDEAKAEQQAKAKAAPDATDNAAQKEE). Residues 1087–1096 (WERDPDEPDE) are compositionally biased toward acidic residues. Basic and acidic residues-rich tracts occupy residues 1097–1117 (PDYKTESRLETRDRFDTLPSE) and 1130–1139 (KEKAQQKRQA). Residues 1116–1247 (SEVQDKLRQK…AKDHQIEEAL (132 aa)) adopt a coiled-coil conformation. Residues 1716-1727 (KAKAAPDATDNA) are compositionally biased toward low complexity. Repeat copies occupy residues 2250-2271 (YSTLGDQNANKGRKLPNGSDDI), 2272-2295 (YSLLGKVKVSGDEPVYDKVSAEGA), 2296-2317 (YDLLGDSNANKGRTLRNNSDDL), 2318-2343 (YSTVGDANSDISRIRSNVYDEIAAGP), 2344-2365 (YSLLGRTKAAEEHIYEQIGEGP), 2366-2387 (YSLLGNGSAVRNRTLGGESNST), 2388-2413 (YSTVGDANSDISRIRSNVYDEIVAGP), 2414-2435 (YSLLGKPKAAEEHIYEQIGEGP), 2436-2457 (YSLLGNGSAVRNRTLGGESDSP), 2458-2483 (YSTVGDANSDISRIRSNVYDEIVAGP), 2484-2505 (YSLLGRTKAAEEHIYEQIGEGP), and 2506-2527 (YSLLGNGSAVRNRTLGGESDSP). Positions 2250-2527 (YSTLGDQNAN…RTLGGESDSP (278 aa)) are 12 X 22 AA approximate repeats. Polar residues-rich tracts occupy residues 2592–2611 (SDTEAGNGTYSEITSRTRNA) and 2794–2803 (TAPQKTSPVK). 6 disordered regions span residues 2592 to 2617 (SDTEAGNGTYSEITSRTRNANDPLPP), 2765 to 2809 (TIGE…SAEG), 2825 to 2894 (AKGQ…SPKR), 2914 to 2933 (LKSKEDQANPAKAEVSEPIY), 2943 to 3033 (LARA…KSED), and 3049 to 3069 (NKSQAKEAKSEQETVSKPNYD). Residues 2880–2889 (PFPSEFSSEP) are compositionally biased toward low complexity. 2 stretches are compositionally biased toward polar residues: residues 2977 to 2996 (SNLSDSISNETIAENGQSVA) and 3005 to 3018 (AESNRNNNGNQKLQ). Residues 3052-3062 (QAKEAKSEQET) show a composition bias toward basic and acidic residues. Residues 3218–3355 (LTVEMIEKLN…AEVVKEFLTE (138 aa)) form the Fido 1 domain. Residues 3222–4095 (MIEKLNHGLR…FNVVNYKKNN (874 aa)) form a yopT-like region. The binds bovine IgG2 Fc stretch occupies residues 3354-3698 (TELGKKSSPQ…VDFINRAKNE (345 aa)). 2 disordered regions span residues 3357-3415 (GKKS…PSVP) and 3432-3454 (AELKDAAGGNKKAAEKSEGATGV). Composition is skewed to polar residues over residues 3360 to 3379 (SSPQEGGANNQNGQATSPVT) and 3388 to 3401 (VENTQSADSLTIKQ). Over residues 3443–3454 (KAAEKSEGATGV) the composition is skewed to basic and acidic residues. Residues 3535 to 3557 (IPEATVKQMSHLPEFDDILTEGA) form an arm region region. The Fido 2 domain occupies 3640–3777 (LTVQMIENLN…SEVVVEFLKE (138 aa)). ATP is bound by residues 3670–3671 (KE), 3722–3724 (GNG), arginine 3728, and glutamine 3757. Positions 3783-3798 (SKEDNEQNLEKTDRTS) are enriched in basic and acidic residues. Residues 3783 to 3829 (SKEDNEQNLEKTDRTSTDLTESAVENSAALSSGTVRSATVSETVTET) are disordered. Positions 3799–3815 (TDLTESAVENSAALSSG) are enriched in polar residues. Residues 3816–3829 (TVRSATVSETVTET) show a composition bias toward low complexity. Catalysis depends on for cysteine protease activity residues cysteine 3910, histidine 4033, and aspartate 4048.

It in the central section; belongs to the fic family. This sequence in the C-terminal section; belongs to the peptidase C58 family. In terms of assembly, immunoglobulin-binding protein. Post-translationally, the long form of the protein is probably processed, and/or the transcript may be subject to differential translational initiation.

The protein resides in the secreted. Its subcellular location is the cell outer membrane. It catalyses the reaction L-tyrosyl-[protein] + ATP = O-(5'-adenylyl)-L-tyrosyl-[protein] + diphosphate. The catalysed reaction is L-threonyl-[protein] + ATP = 3-O-(5'-adenylyl)-L-threonyl-[protein] + diphosphate. In terms of biological role, adenylyltransferase involved in virulence by mediating the addition of adenosine 5'-monophosphate (AMP) to specific tyrosine residue of host Rho GTPases RhoA, Rac and Cdc42. The resulting AMPylation inactivates Rho GTPases, thereby inhibiting actin assembly in infected cells. Probably also acts as a cysteine protease, which may play a central role after invasion of host cell and in virulence. Possible member (with IbpB) of a 2 partner secretion. Probably able to bind bovine epithelial cells (host cells). May participate in the formation of fibrils at the surface of the bacteria. This chain is Protein adenylyltransferase and cysteine protease IbpA (ibpA), found in Histophilus somni (strain 2336) (Haemophilus somnus).